A 431-amino-acid chain; its full sequence is Histidine--tRNA ligase (431 aa).

The protein belongs to the class-II aminoacyl-tRNA synthetase family. As to quaternary structure, homodimer.

The protein localises to the cytoplasm. It carries out the reaction tRNA(His) + L-histidine + ATP = L-histidyl-tRNA(His) + AMP + diphosphate + H(+). In Levilactobacillus brevis (strain ATCC 367 / BCRC 12310 / CIP 105137 / JCM 1170 / LMG 11437 / NCIMB 947 / NCTC 947) (Lactobacillus brevis), this protein is Histidine--tRNA ligase.